The sequence spans 180 residues: Bifunctional protein PyrR (180 aa).

A PRPP-binding motif is present at residues 101 to 113 (VILVDDVLYTGRT).

The protein belongs to the purine/pyrimidine phosphoribosyltransferase family. PyrR subfamily. As to quaternary structure, homodimer and homohexamer; in equilibrium.

The enzyme catalyses UMP + diphosphate = 5-phospho-alpha-D-ribose 1-diphosphate + uracil. Functionally, regulates transcriptional attenuation of the pyrimidine nucleotide (pyr) operon by binding in a uridine-dependent manner to specific sites on pyr mRNA. This disrupts an antiterminator hairpin in the RNA and favors formation of a downstream transcription terminator, leading to a reduced expression of downstream genes. Its function is as follows. Also displays a weak uracil phosphoribosyltransferase activity which is not physiologically significant. This is Bifunctional protein PyrR from Bacillus cereus (strain ATCC 14579 / DSM 31 / CCUG 7414 / JCM 2152 / NBRC 15305 / NCIMB 9373 / NCTC 2599 / NRRL B-3711).